The primary structure comprises 139 residues: Single-stranded DNA-binding protein 2 (139 aa).

In terms of domain architecture, SSB spans Met-1–Glu-104. The segment at Leu-103–Phe-139 is disordered. Low complexity predominate over residues Lys-106–Asn-125. Acidic residues predominate over residues Asn-129–Phe-139.

In terms of assembly, homotetramer.

The polypeptide is Single-stranded DNA-binding protein 2 (ssb-p) (Staphylococcus aureus (strain COL)).